A 1031-amino-acid polypeptide reads, in one-letter code: MQTFSNINLVKPSRDWRVEKGDIDENNSGSINNRPLSPTLFSSNSSNNNNNNTTNNYIAVNGNLVLGVNGVGVGEQAQSLDIAVENPEECILWYYNYFLGKSHQNYLGTLDNGDVFGASIKKEEYAIEGEYSYKTIIWTLEGIERQWFQLKKHASTTPTDIIKKALPRLQIKKIKEIDSPDLLKDFKDLEQTQTEINYKFGLLLARPNQSSEDDFYNNVEHSPKWTEFLNLLGDTVVLNSFKGYRGGLDVNNNTTGTHSLYTSLKGYEVMFHVSTMLPHSKADSQQIERKRHLGNDIVIIIFYDCDPSDPIIPWDPSTVNSNFNHIFAVVRPADENNYHVEIVIKHGIAKFGPVLPTHSIFPKNSTFKEFLITKLVNAQRAALNSAPSFATKLKRTFKDQLESIYKKHSSSSSSLSFVPKRRSSSVSNINKGRELKVKDPKYGSGFFKLLSKDSNKTQVFDTEILFSKSLNEKINCLDVVESDENNSTLIVATEESIYLLKSNMITGEQLFQKIIVMKDVIRLTLVKPLKILLVLTGKGLCFFEMDTIFQQFNNLSTNSTIPSSYAIPIPTTPTTSNNNGGSGFFSSNNLSNGHTSLRWSKSGIIAAGLINNNNNSNSINSINSNNNNNINNSSINNNNGGNTNILAPSVFLSVNNNNNNSGNNIFNNNNNNNNNGGLNNSSENILTVIGEDSIKVKKIVGTKGCTVYGYTKGDNEGQEEDITLLYVGLKKTLLLYEWNKGEFVKSRELPLMDNIKTLCAIAPGMICVGIQKEFLLIDIFTQTIKELYKKSDSEPVKALSLDNEILLCFNNIGIFVDESGNKTRQFELKWGSTPSSLALVPSYVLGISGPLIEVRTLLNGNIIQSLPANISLSNDDCNLDNHYHHHEIINNCSAINIVNNQLSDNIENINNLNINNNNGNNNYNNNGNNSNGGNNNNNNNNNNGCNNSLINLDQETNNLMSENSNNGAENVYSFSTFNDIAHVDNGNIYVASSSKGLSCILRIKQNIQLNVLPSPSSSPLKPSLLLPPSPL.

The interval 18 to 48 is disordered; it reads VEKGDIDENNSGSINNRPLSPTLFSSNSSNN. Polar residues predominate over residues 26 to 41; the sequence is NNSGSINNRPLSPTLF. The Rap-GAP domain occupies 186–404; sequence FKDLEQTQTE…RTFKDQLESI (219 aa). Positions 471 to 881 constitute a CNH domain; that stretch reads NEKINCLDVV…LSNDDCNLDN (411 aa). Residues 920–950 are disordered; it reads NNNYNNNGNNSNGGNNNNNNNNNNGCNNSLI.

The chain is GTPase-activating protein DDB_G0291510 from Dictyostelium discoideum (Social amoeba).